The primary structure comprises 287 residues: Lipoyl synthase (287 aa).

Residues Cys34, Cys39, Cys45, Cys60, Cys64, Cys67, and Ser273 each contribute to the [4Fe-4S] cluster site. The 217-residue stretch at 46–262 folds into the Radical SAM core domain; sequence WNKRHATVMI…KYIAYSKGFL (217 aa).

Belongs to the radical SAM superfamily. Lipoyl synthase family. It depends on [4Fe-4S] cluster as a cofactor.

It localises to the cytoplasm. It catalyses the reaction [[Fe-S] cluster scaffold protein carrying a second [4Fe-4S](2+) cluster] + N(6)-octanoyl-L-lysyl-[protein] + 2 oxidized [2Fe-2S]-[ferredoxin] + 2 S-adenosyl-L-methionine + 4 H(+) = [[Fe-S] cluster scaffold protein] + N(6)-[(R)-dihydrolipoyl]-L-lysyl-[protein] + 4 Fe(3+) + 2 hydrogen sulfide + 2 5'-deoxyadenosine + 2 L-methionine + 2 reduced [2Fe-2S]-[ferredoxin]. The protein operates within protein modification; protein lipoylation via endogenous pathway; protein N(6)-(lipoyl)lysine from octanoyl-[acyl-carrier-protein]: step 2/2. Catalyzes the radical-mediated insertion of two sulfur atoms into the C-6 and C-8 positions of the octanoyl moiety bound to the lipoyl domains of lipoate-dependent enzymes, thereby converting the octanoylated domains into lipoylated derivatives. The protein is Lipoyl synthase of Wolbachia pipientis wMel.